A 706-amino-acid chain; its full sequence is Phosphatase and actin regulator 4 (706 aa).

The RPEL 1 repeat unit spans residues 42–67 (EVLERKISMRKPREELVKRGLLVEVP). 4 disordered regions span residues 65 to 123 (EVPE…QPCA), 196 to 380 (VHPR…HIPV), 385 to 404 (VPMLTLAPPNTEVEKEQSAS), and 459 to 579 (LKVP…REEW). Residues 106-121 (DSTGSRPKSGETTVQP) show a composition bias toward polar residues. The segment covering 200–211 (HLSEKNSEKYRP) has biased composition (basic and acidic residues). Polar residues predominate over residues 266–276 (DPSTRQQSSVP). Positions 290 to 299 (KQPPVPPPKP) are enriched in pro residues. Composition is skewed to acidic residues over residues 463-476 (DDDDDDNSLEDESL), 508-523 (QEEEEEEEEGVSDTDS), and 531-541 (EDDEEEEEEET). Residues 563-579 (GPHDSNPEFPQRSREEW) are compositionally biased toward basic and acidic residues. RPEL repeat units follow at residues 588-613 (SQLNRRLSQRPSAEELEQRNILQKNE) and 625-650 (RRLTRKLSQRPTVAELVERKILRFNE).

It belongs to the phosphatase and actin regulator family. As to quaternary structure, binds ppp1ca and actin.

It is found in the cytoplasm. The protein localises to the cell projection. It localises to the lamellipodium. Regulator of protein phosphatase 1 (PP1) required for neural tube and optic fissure closure, and enteric neural crest cell (ENCCs) migration during development. Acts as an activator of PP1. During neural tube closure, localizes to the ventral neural tube and activates PP1, leading to down-regulate cell proliferation within cranial neural tissue and the neural retina. Also acts as a regulator of migration of enteric neural crest cells (ENCCs) by activating PP1, leading to repression of the integrin signaling through the rho/rock pathway. This Xenopus tropicalis (Western clawed frog) protein is Phosphatase and actin regulator 4 (phactr4).